Here is a 207-residue protein sequence, read N- to C-terminus: Crossover junction endodeoxyribonuclease RuvC (207 aa).

Catalysis depends on residues Asp-11, Glu-71, and Asp-143. The Mg(2+) site is built by Asp-11, Glu-71, and Asp-143.

Belongs to the RuvC family. Homodimer which binds Holliday junction (HJ) DNA. The HJ becomes 2-fold symmetrical on binding to RuvC with unstacked arms; it has a different conformation from HJ DNA in complex with RuvA. In the full resolvosome a probable DNA-RuvA(4)-RuvB(12)-RuvC(2) complex forms which resolves the HJ. It depends on Mg(2+) as a cofactor.

It localises to the cytoplasm. It carries out the reaction Endonucleolytic cleavage at a junction such as a reciprocal single-stranded crossover between two homologous DNA duplexes (Holliday junction).. In terms of biological role, the RuvA-RuvB-RuvC complex processes Holliday junction (HJ) DNA during genetic recombination and DNA repair. Endonuclease that resolves HJ intermediates. Cleaves cruciform DNA by making single-stranded nicks across the HJ at symmetrical positions within the homologous arms, yielding a 5'-phosphate and a 3'-hydroxyl group; requires a central core of homology in the junction. The consensus cleavage sequence is 5'-(A/T)TT(C/G)-3'. Cleavage occurs on the 3'-side of the TT dinucleotide at the point of strand exchange. HJ branch migration catalyzed by RuvA-RuvB allows RuvC to scan DNA until it finds its consensus sequence, where it cleaves and resolves the cruciform DNA. The polypeptide is Crossover junction endodeoxyribonuclease RuvC (Methylobacterium radiotolerans (strain ATCC 27329 / DSM 1819 / JCM 2831 / NBRC 15690 / NCIMB 10815 / 0-1)).